We begin with the raw amino-acid sequence, 354 residues long: MFLRSSVSRLLHGQIPCALTRSVHSVAVVGAPFSRGQKKKGVEYGPAAIREAGLLKRLSMLGCHIKDFGDLSFTNVPKDDPYNNLVVYPRSVGIANQELAEVVSRAVSGGYSCVTLGGDHSLAIGTISGHARHHPDLCVIWVDAHADINTPLTTVSGNIHGQPLSFLIRELQDKVPQLPGFSWIKPCLSPPNLVYIGLRDVEPAEHFILKSFDIQYFSMRDIDRLGIQKVMEQTFDRLIGKRKRPIHLSFDIDAFDPKLAPATGTPVVGGLTYREGLYITEEIHSTGLLSALDLVEVNPHLATSEEEAKATASLAVDVIASSFGQTREGGHIAYDHLPTPSSPHESEKEECVRI.

Residues methionine 1–serine 22 constitute a mitochondrion transit peptide. 4 residues coordinate Mn(2+): histidine 120, aspartate 143, histidine 145, and aspartate 147. Residues histidine 145–asparagine 149, serine 156–asparagine 158, and glutamate 202 each bind substrate. The Mn(2+) site is built by aspartate 251 and aspartate 253. Threonine 265 and glutamate 296 together coordinate substrate.

This sequence belongs to the arginase family. Homotrimer. The cofactor is Mn(2+).

It is found in the mitochondrion. The enzyme catalyses L-arginine + H2O = urea + L-ornithine. The protein operates within nitrogen metabolism; urea cycle; L-ornithine and urea from L-arginine: step 1/1. Functionally, may play a role in the regulation of extra-urea cycle arginine metabolism and also in down-regulation of nitric oxide synthesis. Extrahepatic arginase functions to regulate L-arginine bioavailability to nitric oxid synthase (NOS). Arginine metabolism is a critical regulator of innate and adaptive immune responses. Seems to be involved in negative regulation of the survival capacity of activated T cells. May suppress inflammation-related signaling in asthmatic airway epithelium. May play a role in promoting prenatal immune suppression. Regulates RPS6KB1 signaling, which promotes endothelial cell senescence and inflammation and implicates NOS3/eNOS dysfunction. Can inhibit endothelial autophagy independently of its enzymatic activity implicating mTORC2 signaling. Involved in vascular smooth muscle cell senescence and apoptosis independently of its enzymatic activity. This Rattus norvegicus (Rat) protein is Arginase-2, mitochondrial (Arg2).